The chain runs to 281 residues: Putative pyruvate, phosphate dikinase regulatory protein (281 aa).

ADP is bound at residue 153 to 160; the sequence is GISRTSKT.

This sequence belongs to the pyruvate, phosphate/water dikinase regulatory protein family. PDRP subfamily.

The catalysed reaction is N(tele)-phospho-L-histidyl/L-threonyl-[pyruvate, phosphate dikinase] + ADP = N(tele)-phospho-L-histidyl/O-phospho-L-threonyl-[pyruvate, phosphate dikinase] + AMP + H(+). The enzyme catalyses N(tele)-phospho-L-histidyl/O-phospho-L-threonyl-[pyruvate, phosphate dikinase] + phosphate + H(+) = N(tele)-phospho-L-histidyl/L-threonyl-[pyruvate, phosphate dikinase] + diphosphate. Its function is as follows. Bifunctional serine/threonine kinase and phosphorylase involved in the regulation of the pyruvate, phosphate dikinase (PPDK) by catalyzing its phosphorylation/dephosphorylation. In Bdellovibrio bacteriovorus (strain ATCC 15356 / DSM 50701 / NCIMB 9529 / HD100), this protein is Putative pyruvate, phosphate dikinase regulatory protein.